Consider the following 305-residue polypeptide: uncharacterized protein (305 aa).

Residues 1-10 show a composition bias toward basic residues; that stretch reads MLWAQRKKRK. Positions 1-30 are disordered; it reads MLWAQRKKRKATTETTEDKPAESHRPNDSW. Residues 16–27 show a composition bias toward basic and acidic residues; it reads TEDKPAESHRPN. Ser39 is subject to Phosphoserine. Positions 92–101 are enriched in polar residues; the sequence is QKISGTSVSK. The segment at 92–114 is disordered; that stretch reads QKISGTSVSKEMQRESGKSPSME. A Phosphoserine modification is found at Ser158. The span at 197-208 shows a compositional bias: low complexity; that stretch reads SHHGNQSHQNHN. Positions 197-305 are disordered; it reads SHHGNQSHQN…VNRRNQIYDS (109 aa). Polar residues-rich tracts occupy residues 209 to 221 and 231 to 244; these read TYPCHQNNQSRSV and LSHQGYPSYSSHQN. Residues 247–293 show a composition bias toward low complexity; the sequence is GHPSQQGHSSHSNQQGHLGLSSQQGHPSQSSHQSHQGQPGHPNHQSH. Polar residues predominate over residues 294–305; that stretch reads SLVNRRNQIYDS.

This is an uncharacterized protein from Rattus norvegicus (Rat).